Consider the following 636-residue polypeptide: Probable cyclin-dependent serine/threonine-protein kinase DDB_G0278487 (636 aa).

Residues 1 to 41 (MPSQSNNVITSSTASSSMSSSSNSSDASSTSSSNTNNAHSS) form a disordered region. Residues 64–343 (YEIISKIGEG…AEQALQSPFF (280 aa)) enclose the Protein kinase domain. ATP contacts are provided by residues 70 to 78 (IGEGISGSV) and Lys-93. The active-site Proton acceptor is the Asp-184. Disordered regions lie at residues 378–408 (EQQK…QKKQ), 473–506 (KRQQ…NNSY), 527–555 (SETE…DEED), and 579–636 (NNQQ…LTIH). The segment covering 473–485 (KRQQQEHEQRLQR) has biased composition (basic and acidic residues). A compositionally biased stretch (low complexity) spans 486–499 (EQQQQLNQLQQQKE). Residues 529-555 (TESEYESDEEDFYTEEEVEDYSSDEED) show a composition bias toward acidic residues. Low complexity-rich tracts occupy residues 579–594 (NNQQ…QQQQ) and 617–628 (NNNNGNNNNNNN).

Belongs to the protein kinase superfamily. CMGC Ser/Thr protein kinase family. CDC2/CDKX subfamily.

The catalysed reaction is L-seryl-[protein] + ATP = O-phospho-L-seryl-[protein] + ADP + H(+). It carries out the reaction L-threonyl-[protein] + ATP = O-phospho-L-threonyl-[protein] + ADP + H(+). This is Probable cyclin-dependent serine/threonine-protein kinase DDB_G0278487 from Dictyostelium discoideum (Social amoeba).